Consider the following 317-residue polypeptide: Uridine phosphorylase 2 (317 aa).

Phosphate-binding positions include Gly-66, Arg-100, and 144-147 (RIGT). An intrachain disulfide couples Cys-95 to Cys-102. Uridine contacts are provided by residues 148–149 (SG) and 223–225 (QGR).

This sequence belongs to the PNP/UDP phosphorylase family. Homodimer. As to expression, predominantly expressed in kidney.

It carries out the reaction uridine + phosphate = alpha-D-ribose 1-phosphate + uracil. It catalyses the reaction 2'-deoxyuridine + phosphate = 2-deoxy-alpha-D-ribose 1-phosphate + uracil. It functions in the pathway pyrimidine metabolism; UMP biosynthesis via salvage pathway; uracil from uridine (phosphorylase route): step 1/1. Its activity is regulated as follows. A conditional disulfide bridge can form within the protein that dislocates a critical phosphate-coordinating arginine Arg-100 away from the active site, disabling the enzyme. Functionally, catalyzes the reversible phosphorylytic cleavage of uridine to uracil and ribose-1-phosphate which can then be utilized as carbon and energy sources or in the rescue of pyrimidine bases for nucleotide synthesis. Shows broad substrate specificity and can also accept deoxyuridine and other analogous compounds. This chain is Uridine phosphorylase 2, found in Homo sapiens (Human).